The following is a 145-amino-acid chain: U1 small nuclear ribonucleoprotein C (145 aa).

The Matrin-type zinc-finger motif lies at 4 to 36 (YYCDYCDTYLTHDSPSVRKTHCTGRKHRDNVKF). The segment at 67–91 (FAGGPGGAPPKPAGVSIPPPNMGAP) is disordered. A compositionally biased stretch (pro residues) spans 73–91 (GAPPKPAGVSIPPPNMGAP).

The protein belongs to the U1 small nuclear ribonucleoprotein C family. In terms of assembly, U1 snRNP is composed of the 7 core Sm proteins B/B', D1, D2, D3, E, F and G that assemble in a heptameric protein ring on the Sm site of the small nuclear RNA to form the core snRNP, and at least 3 U1 snRNP-specific proteins U1-70K, U1-A and U1-C. U1-C interacts with U1 snRNA and the 5' splice-site region of the pre-mRNA.

It is found in the nucleus. Its function is as follows. Component of the spliceosomal U1 snRNP, which is essential for recognition of the pre-mRNA 5' splice-site and the subsequent assembly of the spliceosome. U1-C is directly involved in initial 5' splice-site recognition for both constitutive and regulated alternative splicing. The interaction with the 5' splice-site seems to precede base-pairing between the pre-mRNA and the U1 snRNA. Stimulates commitment or early (E) complex formation by stabilizing the base pairing of the 5' end of the U1 snRNA and the 5' splice-site region. Regulates alternative splicing of a distinct group of target genes. The sequence is that of U1 small nuclear ribonucleoprotein C from Drosophila melanogaster (Fruit fly).